The chain runs to 66 residues: Putative ankyrin repeat protein RF_pd14 (66 aa).

One copy of the ANK repeat lies at 14-66; sequence KLNQKLMRAAATGDIEAVQKLVLRGADIYCRDHQGDTALSLAAGSGYLDILDI.

This Rickettsia felis (strain ATCC VR-1525 / URRWXCal2) (Rickettsia azadi) protein is Putative ankyrin repeat protein RF_pd14.